The following is a 34-amino-acid chain: MSDIN-like toxin proprotein 5 (34 aa).

A propeptide spanning residues 1-10 (MSDINTARLP) is cleaved from the precursor. The segment at residues 11 to 20 (YVVFMSFIPP) is a cross-link (cyclopeptide (Tyr-Pro)). The propeptide occupies 21 to 34 (CVNDDIQVVLTRGE).

The protein belongs to the MSDIN fungal toxin family. Processed by the macrocyclase-peptidase enzyme POPB to yield a toxic cyclic decapeptide. POPB first removes 10 residues from the N-terminus. Conformational trapping of the remaining peptide forces the enzyme to release this intermediate rather than proceed to macrocyclization. The enzyme rebinds the remaining peptide in a different conformation and catalyzes macrocyclization of the N-terminal 10 residues.

Probable toxin that belongs to the MSDIN-like toxin family responsible for a large number of food poisoning cases and deaths. The protein is MSDIN-like toxin proprotein 5 of Amanita bisporigera (Destroying angel).